The following is a 256-amino-acid chain: C-8 sterol isomerase (256 aa).

The segment at 1 to 31 is disordered; the sequence is MPPKKQSSSGGNKPSGSGSSSGRSSSGSSCR. Residues 7 to 30 show a composition bias toward low complexity; that stretch reads SSSGGNKPSGSGSSSGRSSSGSSC. The helical transmembrane segment at 40 to 60 threads the bilayer; that stretch reads IGGWLKFFAILFALVAPIAYV.

The protein belongs to the ERG2 family.

It is found in the endoplasmic reticulum membrane. The protein operates within steroid metabolism; ergosterol biosynthesis; ergosterol from zymosterol: step 2/5. Functionally, catalyzes the reaction which results in unsaturation at C-7 in the B ring of sterols. The polypeptide is C-8 sterol isomerase (erg-1) (Neurospora crassa (strain ATCC 24698 / 74-OR23-1A / CBS 708.71 / DSM 1257 / FGSC 987)).